The primary structure comprises 88 residues: MTNDSVPAKVMEIVAKQLEKDQKEVTPESSFANDLGADSLDTVELVMALEEEFGTEIPDEEAEKITTVQAAVDYIQNKMDDGKIKLEK.

The 76-residue stretch at 4–79 (DSVPAKVMEI…AAVDYIQNKM (76 aa)) folds into the Carrier domain. O-(pantetheine 4'-phosphoryl)serine is present on serine 39.

The protein belongs to the acyl carrier protein (ACP) family. In terms of processing, 4'-phosphopantetheine is transferred from CoA to a specific serine of apo-ACP by AcpS. This modification is essential for activity because fatty acids are bound in thioester linkage to the sulfhydryl of the prosthetic group.

It localises to the cytoplasm. It functions in the pathway lipid metabolism; fatty acid biosynthesis. Carrier of the growing fatty acid chain in fatty acid biosynthesis. The sequence is that of Acyl carrier protein from Trichodesmium erythraeum (strain IMS101).